We begin with the raw amino-acid sequence, 316 residues long: Protoheme IX farnesyltransferase (316 aa).

Transmembrane regions (helical) follow at residues 29–49 (IIPL…EGRV), 54–74 (LLIT…LNCI), 102–122 (LIFA…FVNV), 123–143 (LSGC…THWL), 151–171 (IVIG…AVTG), 179–199 (VLFA…ALMI), 224–241 (IWYY…LVYP), 245–267 (LGIL…AWQL), and 283–303 (FSIF…LPVT).

This sequence belongs to the UbiA prenyltransferase family. Protoheme IX farnesyltransferase subfamily.

The protein resides in the cell inner membrane. It carries out the reaction heme b + (2E,6E)-farnesyl diphosphate + H2O = Fe(II)-heme o + diphosphate. The protein operates within porphyrin-containing compound metabolism; heme O biosynthesis; heme O from protoheme: step 1/1. In terms of biological role, converts heme B (protoheme IX) to heme O by substitution of the vinyl group on carbon 2 of heme B porphyrin ring with a hydroxyethyl farnesyl side group. The sequence is that of Protoheme IX farnesyltransferase from Synechocystis sp. (strain ATCC 27184 / PCC 6803 / Kazusa).